The following is a 320-amino-acid chain: Cytochrome f (320 aa).

A signal peptide spans 1-35 (MQTRNTFSWIREEITRSISVSLMIYIITWASISSA). 4 residues coordinate heme: Y36, C56, C59, and H60. The helical transmembrane segment at 286–306 (VQGLLFFLGSVVLAQIFLVLK) threads the bilayer.

It belongs to the cytochrome f family. The 4 large subunits of the cytochrome b6-f complex are cytochrome b6, subunit IV (17 kDa polypeptide, petD), cytochrome f and the Rieske protein, while the 4 small subunits are PetG, PetL, PetM and PetN. The complex functions as a dimer. The cofactor is heme.

It is found in the plastid. Its subcellular location is the chloroplast thylakoid membrane. Component of the cytochrome b6-f complex, which mediates electron transfer between photosystem II (PSII) and photosystem I (PSI), cyclic electron flow around PSI, and state transitions. The polypeptide is Cytochrome f (Lepidium virginicum (Virginia pepperweed)).